The chain runs to 271 residues: Gap junction beta-5 protein (271 aa).

Residues 1–20 are Cytoplasmic-facing; it reads MNWSVFEGLLSGVNKYSTAF. Residues 21–40 form a helical membrane-spanning segment; it reads GRIWLSLVFVFRVLVYLVTA. Over 41 to 75 the chain is Extracellular; sequence ERVWGDDQKDFDCNTRQPGCTNVCYDEFFPVSHVR. Residues 76–98 traverse the membrane as a helical segment; the sequence is LWALQLILVTCPSLLVVMHVAYR. The Cytoplasmic portion of the chain corresponds to 99–124; it reads KAREKKYQQEVGKGYLYPNPGKKRGG. The helical transmembrane segment at 125–147 threads the bilayer; the sequence is LWWTYVCSLLFKATIDIIFLYLF. Residues 148 to 182 lie on the Extracellular side of the membrane; sequence HAFYPRYTLPSMVKCHSAPCPNTVDCFIAKPSEKN. Residues 183–205 form a helical membrane-spanning segment; sequence IFIVFMLVTAIVCILLNLVELLY. The Cytoplasmic portion of the chain corresponds to 206–271; that stretch reads LVIKRCSECA…PRAHVKKTIL (66 aa). The segment at 217 to 237 is disordered; sequence AKRPPTAHAKNDPNWANPSSK.

It belongs to the connexin family. Beta-type (group I) subfamily. A connexon is composed of a hexamer of connexins. Expressed in skin.

The protein resides in the cell membrane. It is found in the cell junction. The protein localises to the gap junction. One gap junction consists of a cluster of closely packed pairs of transmembrane channels, the connexons, through which materials of low MW diffuse from one cell to a neighboring cell. This is Gap junction beta-5 protein (Gjb5) from Rattus norvegicus (Rat).